The chain runs to 692 residues: Elongation factor G (692 aa).

The tr-type G domain maps to 8–283; sequence NRIRNIGIAA…AVIDYLPAPT (276 aa). Residues 17–24, 81–85, and 135–138 contribute to the GTP site; these read AHIDAGKT, DTPGH, and NKMD.

Belongs to the TRAFAC class translation factor GTPase superfamily. Classic translation factor GTPase family. EF-G/EF-2 subfamily.

Its subcellular location is the cytoplasm. Functionally, catalyzes the GTP-dependent ribosomal translocation step during translation elongation. During this step, the ribosome changes from the pre-translocational (PRE) to the post-translocational (POST) state as the newly formed A-site-bound peptidyl-tRNA and P-site-bound deacylated tRNA move to the P and E sites, respectively. Catalyzes the coordinated movement of the two tRNA molecules, the mRNA and conformational changes in the ribosome. The sequence is that of Elongation factor G (fusA) from Helicobacter pylori (strain ATCC 700392 / 26695) (Campylobacter pylori).